Here is a 98-residue protein sequence, read N- to C-terminus: Bombyxin E-1 (98 aa).

Residues 1-19 form the signal peptide; the sequence is MNRPVFLVLLLTGFLCIAA. Position 20 is a pyrrolidone carboxylic acid (Gln-20). 3 cysteine pairs are disulfide-bonded: Cys-29–Cys-85, Cys-41–Cys-98, and Cys-84–Cys-89. Positions 50-75 are cleaved as a propeptide — c peptide like; that stretch reads SESSLASYSSRGWPWLPTPNFNKRAI.

Belongs to the insulin family. In terms of assembly, heterodimer of a B chain and an A chain linked by two disulfide bonds.

Its subcellular location is the secreted. Its function is as follows. PTTH is a brain peptide responsible for activation of prothoracic glands to produce ecdysone in insects. This Bombyx mori (Silk moth) protein is Bombyxin E-1 (BBXE1).